Here is a 261-residue protein sequence, read N- to C-terminus: Ribosomal RNA small subunit methyltransferase A (261 aa).

Asn15, Ile17, Gly42, Glu64, Asp90, and Asn109 together coordinate S-adenosyl-L-methionine.

The protein belongs to the class I-like SAM-binding methyltransferase superfamily. rRNA adenine N(6)-methyltransferase family. RsmA subfamily.

It localises to the cytoplasm. It carries out the reaction adenosine(1518)/adenosine(1519) in 16S rRNA + 4 S-adenosyl-L-methionine = N(6)-dimethyladenosine(1518)/N(6)-dimethyladenosine(1519) in 16S rRNA + 4 S-adenosyl-L-homocysteine + 4 H(+). Specifically dimethylates two adjacent adenosines (A1518 and A1519) in the loop of a conserved hairpin near the 3'-end of 16S rRNA in the 30S particle. May play a critical role in biogenesis of 30S subunits. The sequence is that of Ribosomal RNA small subunit methyltransferase A from Wolbachia sp. subsp. Brugia malayi (strain TRS).